The following is a 215-amino-acid chain: Adenylyl-sulfate kinase (215 aa).

ATP is bound at residue Gly46 to Ser53. Residue Ser120 is the Phosphoserine intermediate of the active site.

This sequence belongs to the APS kinase family.

It catalyses the reaction adenosine 5'-phosphosulfate + ATP = 3'-phosphoadenylyl sulfate + ADP + H(+). The protein operates within sulfur metabolism; hydrogen sulfide biosynthesis; sulfite from sulfate: step 2/3. Functionally, catalyzes the synthesis of activated sulfate. This chain is Adenylyl-sulfate kinase (cysC), found in Vibrio cholerae serotype O1 (strain ATCC 39315 / El Tor Inaba N16961).